We begin with the raw amino-acid sequence, 136 residues long: S-protein homolog 25 (136 aa).

The first 20 residues, 1-20 (MNHSVFVILITITYFGLNQA), serve as a signal peptide directing secretion. Residues Asn-71 and Asn-84 are each glycosylated (N-linked (GlcNAc...) asparagine).

Belongs to the plant self-incompatibility (S1) protein family.

It localises to the secreted. The polypeptide is S-protein homolog 25 (Arabidopsis thaliana (Mouse-ear cress)).